The primary structure comprises 229 residues: Cytochrome c oxidase subunit 2 (229 aa).

Residues M1–H26 lie on the Mitochondrial intermembrane side of the membrane. A helical transmembrane segment spans residues A27–N48. Residues S49–E62 lie on the Mitochondrial matrix side of the membrane. A helical transmembrane segment spans residues M63–R82. Over L83–S229 the chain is Mitochondrial intermembrane. Cu cation-binding residues include H161, C196, E198, C200, H204, and M207. E198 lines the Mg(2+) pocket.

This sequence belongs to the cytochrome c oxidase subunit 2 family. In terms of assembly, component of the cytochrome c oxidase (complex IV, CIV), a multisubunit enzyme composed of a catalytic core of 3 subunits and several supernumerary subunits. The complex exists as a monomer or a dimer and forms supercomplexes (SCs) in the inner mitochondrial membrane with ubiquinol-cytochrome c oxidoreductase (cytochrome b-c1 complex, complex III, CIII). Cu cation is required as a cofactor.

It localises to the mitochondrion inner membrane. It catalyses the reaction 4 Fe(II)-[cytochrome c] + O2 + 8 H(+)(in) = 4 Fe(III)-[cytochrome c] + 2 H2O + 4 H(+)(out). Its function is as follows. Component of the cytochrome c oxidase, the last enzyme in the mitochondrial electron transport chain which drives oxidative phosphorylation. The respiratory chain contains 3 multisubunit complexes succinate dehydrogenase (complex II, CII), ubiquinol-cytochrome c oxidoreductase (cytochrome b-c1 complex, complex III, CIII) and cytochrome c oxidase (complex IV, CIV), that cooperate to transfer electrons derived from NADH and succinate to molecular oxygen, creating an electrochemical gradient over the inner membrane that drives transmembrane transport and the ATP synthase. Cytochrome c oxidase is the component of the respiratory chain that catalyzes the reduction of oxygen to water. Electrons originating from reduced cytochrome c in the intermembrane space (IMS) are transferred via the dinuclear copper A center (CU(A)) of subunit 2 and heme A of subunit 1 to the active site in subunit 1, a binuclear center (BNC) formed by heme A3 and copper B (CU(B)). The BNC reduces molecular oxygen to 2 water molecules using 4 electrons from cytochrome c in the IMS and 4 protons from the mitochondrial matrix. The protein is Cytochrome c oxidase subunit 2 (mt:CoII) of Drosophila subobscura (Fruit fly).